The chain runs to 403 residues: Phosphopentomutase (403 aa).

D13, D298, H303, D339, H340, and H351 together coordinate Mn(2+).

Belongs to the phosphopentomutase family. Requires Mn(2+) as cofactor.

It is found in the cytoplasm. The catalysed reaction is 2-deoxy-alpha-D-ribose 1-phosphate = 2-deoxy-D-ribose 5-phosphate. The enzyme catalyses alpha-D-ribose 1-phosphate = D-ribose 5-phosphate. It functions in the pathway carbohydrate degradation; 2-deoxy-D-ribose 1-phosphate degradation; D-glyceraldehyde 3-phosphate and acetaldehyde from 2-deoxy-alpha-D-ribose 1-phosphate: step 1/2. Isomerase that catalyzes the conversion of deoxy-ribose 1-phosphate (dRib-1-P) and ribose 1-phosphate (Rib-1-P) to deoxy-ribose 5-phosphate (dRib-5-P) and ribose 5-phosphate (Rib-5-P), respectively. This chain is Phosphopentomutase, found in Streptococcus pyogenes serotype M18 (strain MGAS8232).